Consider the following 846-residue polypeptide: uncharacterized protein (846 aa).

6 WD repeats span residues 88–129 (TKHI…LLYD), 132–172 (EHSR…STIT), 175–215 (GNSE…LPFL), 219–258 (AHNG…KKSL), 262–309 (NNVS…IPYR), and 313–348 (CHDS…NAFN). The disordered stretch occupies residues 541–560 (PREASTPSESSNSSIESEDN). Residues 544 to 555 (ASTPSESSNSSI) are compositionally biased toward low complexity. The stretch at 624–663 (FHRSSVTSASIKSREAVLSAGNSSRRASIFLDQLSLHGDT) is one WD 7 repeat.

This is an uncharacterized protein from Schizosaccharomyces pombe (strain 972 / ATCC 24843) (Fission yeast).